Here is a 324-residue protein sequence, read N- to C-terminus: Dioxygenase tasH (324 aa).

An N-terminal signal peptide occupies residues 1–25 (MRSMSLWMLIGPVTGIATWASLRYA). Residues H50, H96, and H284 each coordinate Zn(2+).

Belongs to the DODA-type extradiol aromatic ring-opening dioxygenase family. As to quaternary structure, monomer. It depends on Zn(2+) as a cofactor.

In terms of biological role, dioxygenase; part of the gene cluster that mediates the biosynthesis of the tetramic acids Sch210971 and Sch210972, potential anti-HIV fungal natural product that contain a decalin core. The PKS module of tasS together with the enoylreductase tasC catalyze the formation of the polyketide unit which is then conjugated to 4-hydroxyl-4-methyl glutamate (HMG) by the condensation domain of the tasS NRPS module. One unique structural feature of Sch210971 and Sch210972 is the tetramic acid motif proposed to be derived from the non-proteinogenic amino acid HMG, by a Dieckmann-type condensation catalyzed by the reductase domain of tasS. The aldolase tasA catalyzes the aldol condensation of 2 molecules of pyruvic acid to yield the intermediate 4-hydroxyl-4-methyl-2-oxoglutarate (HMOG), which can then be stereoselectively transaminated, may be by tasG, to form HMG. The Diels-Alderase tas3 then uses the Dieckmann product of tasS as substrate and catalyzes the Diels-Alder cycloaddition to form the decalin ring of Sch210971 and Sch210972. In Hapsidospora irregularis, this protein is Dioxygenase tasH.